The chain runs to 333 residues: Electron transfer flavoprotein subunit alpha, mitochondrial (333 aa).

A mitochondrion-targeting transit peptide spans 1-19; sequence MFRAAAPGQLRRAASLLRF. Residues 20-204 form a domain I region; sequence QSTLVIAEHA…EISEWLDQKL (185 aa). Residue lysine 59 is modified to N6-acetyllysine; alternate. The residue at position 59 (lysine 59) is an N6-succinyllysine; alternate. Residue lysine 62 is modified to N6-acetyllysine. An N6-acetyllysine; alternate modification is found at lysine 69. The residue at position 69 (lysine 69) is an N6-succinyllysine; alternate. The residue at position 75 (lysine 75) is an N6-acetyllysine. Lysine 85 is modified (N6-acetyllysine; alternate). At lysine 85 the chain carries N6-succinyllysine; alternate. Position 93 is a phosphothreonine (threonine 93). Lysine 101 and lysine 139 each carry N6-acetyllysine. Serine 140 is subject to Phosphoserine. Residue lysine 158 is modified to N6-acetyllysine; alternate. Position 158 is an N6-succinyllysine; alternate (lysine 158). Lysine 164 is modified (N6-acetyllysine). Lysine 187 is modified (N6-succinyllysine). Lysine 203 is subject to N6-acetyllysine; alternate. At lysine 203 the chain carries N6-succinyllysine; alternate. Positions 205 to 333 are domain II; the sequence is TKSDRPELTG…PEMTEILKKK (129 aa). At lysine 216 the chain carries N6-succinyllysine. Arginine 223 lines the FAD pocket. 2 positions are modified to N6-acetyllysine; alternate: lysine 226 and lysine 232. 2 positions are modified to N6-succinyllysine; alternate: lysine 226 and lysine 232. Residues serine 248, 263–266, 281–286, and asparagine 300 each bind FAD; these read VGQT and SGAIQH. N6-succinyllysine is present on lysine 301. 318–319 is an FAD binding site; that stretch reads DL.

It belongs to the ETF alpha-subunit/FixB family. In terms of assembly, heterodimer composed of ETFA and ETFB. Identified in a complex that contains ETFA, ETFB and ETFRF1. Interaction with ETFRF1 promotes dissociation of the bound FAD and loss of electron transfer activity. Interacts with TASOR. FAD is required as a cofactor. Post-translationally, the N-terminus is blocked.

The protein resides in the mitochondrion matrix. In terms of biological role, heterodimeric electron transfer flavoprotein that accepts electrons from several mitochondrial dehydrogenases, including acyl-CoA dehydrogenases, glutaryl-CoA and sarcosine dehydrogenase. It transfers the electrons to the main mitochondrial respiratory chain via ETF-ubiquinone oxidoreductase (ETF dehydrogenase). Required for normal mitochondrial fatty acid oxidation and normal amino acid metabolism. This is Electron transfer flavoprotein subunit alpha, mitochondrial (ETFA) from Homo sapiens (Human).